Consider the following 242-residue polypeptide: tRNA (guanine-N(1)-)-methyltransferase (242 aa).

S-adenosyl-L-methionine-binding positions include Gly-109 and 129–134 (LGDFVL).

The protein belongs to the RNA methyltransferase TrmD family. Homodimer.

It localises to the cytoplasm. It catalyses the reaction guanosine(37) in tRNA + S-adenosyl-L-methionine = N(1)-methylguanosine(37) in tRNA + S-adenosyl-L-homocysteine + H(+). Specifically methylates guanosine-37 in various tRNAs. This is tRNA (guanine-N(1)-)-methyltransferase from Exiguobacterium sibiricum (strain DSM 17290 / CCUG 55495 / CIP 109462 / JCM 13490 / 255-15).